A 179-amino-acid chain; its full sequence is Signal peptidase complex subunit 3 (179 aa).

Residues 1 to 12 (MHTVLTRGNATV) lie on the Cytoplasmic side of the membrane. Residues 13–33 (AYTLSVLACLTFSCFLSTVFL) traverse the membrane as a helical; Signal-anchor for type II membrane protein segment. At 34 to 179 (DYRTDANINT…FPADYATSSI (146 aa)) the chain is on the lumenal side. Residues asparagine 73 and asparagine 141 are each glycosylated (N-linked (GlcNAc...) asparagine).

Belongs to the SPCS3 family. In terms of assembly, component of the signal peptidase complex (SPC) composed of a catalytic subunit twr/SEC11 and three accessory subunits Spase12/SPCS1, Spase25/SPCS2 and Spase22-23/SPCS3. The complex induces a local thinning of the ER membrane which is used to measure the length of the signal peptide (SP) h-region of protein substrates. This ensures the selectivity of the complex towards h-regions shorter than 18-20 amino acids.

It is found in the endoplasmic reticulum membrane. Essential component of the signal peptidase complex (SPC) which catalyzes the cleavage of N-terminal signal sequences from nascent proteins as they are translocated into the lumen of the endoplasmic reticulum. Essential for the SPC catalytic activity, possibly by stabilizing and positioning the active center of the complex close to the lumenal surface. In terms of biological role, (Microbial infection) Plays an important role in infection by flaviviruses such as West Nile virus and Dengue virus type 2. This chain is Signal peptidase complex subunit 3 (Spase22-23), found in Drosophila melanogaster (Fruit fly).